A 331-amino-acid polypeptide reads, in one-letter code: tRNA (guanine-N(1)-)-methyltransferase (331 aa).

2 stretches are compositionally biased toward low complexity: residues 77–99 (GSDT…QATR) and 107–134 (AQPG…GRAA). The segment at 77-137 (GSDTTARSGS…PGAGRAASSR (61 aa)) is disordered. S-adenosyl-L-methionine contacts are provided by residues Gly169 and 193–198 (LGDYVL). Residues 312–331 (WQRCSPAPSEQAPEGARDMA) form a disordered region.

The protein belongs to the RNA methyltransferase TrmD family. Homodimer.

It localises to the cytoplasm. The catalysed reaction is guanosine(37) in tRNA + S-adenosyl-L-methionine = N(1)-methylguanosine(37) in tRNA + S-adenosyl-L-homocysteine + H(+). Its function is as follows. Specifically methylates guanosine-37 in various tRNAs. In Kocuria rhizophila (strain ATCC 9341 / DSM 348 / NBRC 103217 / DC2201), this protein is tRNA (guanine-N(1)-)-methyltransferase.